The following is a 235-amino-acid chain: Glucosamine-6-phosphate deaminase (235 aa).

The Proton acceptor; for enolization step role is filled by D62. N128 serves as the catalytic For ring-opening step. H130 functions as the Proton acceptor; for ring-opening step in the catalytic mechanism. E135 serves as the catalytic For ring-opening step.

The protein belongs to the glucosamine/galactosamine-6-phosphate isomerase family. NagB subfamily.

It catalyses the reaction alpha-D-glucosamine 6-phosphate + H2O = beta-D-fructose 6-phosphate + NH4(+). The protein operates within amino-sugar metabolism; N-acetylneuraminate degradation; D-fructose 6-phosphate from N-acetylneuraminate: step 5/5. In terms of biological role, catalyzes the reversible isomerization-deamination of glucosamine 6-phosphate (GlcN6P) to form fructose 6-phosphate (Fru6P) and ammonium ion. The chain is Glucosamine-6-phosphate deaminase from Streptococcus gordonii (strain Challis / ATCC 35105 / BCRC 15272 / CH1 / DL1 / V288).